A 511-amino-acid polypeptide reads, in one-letter code: Glucans biosynthesis protein G (511 aa).

A signal peptide spans 1–22 (MMKMRWLGAAIMLTLYASSSWA).

It belongs to the OpgD/OpgG family.

It is found in the periplasm. It participates in glycan metabolism; osmoregulated periplasmic glucan (OPG) biosynthesis. Its function is as follows. Involved in the biosynthesis of osmoregulated periplasmic glucans (OPGs). In Salmonella enteritidis PT4 (strain P125109), this protein is Glucans biosynthesis protein G.